The following is a 279-amino-acid chain: Borealin (279 aa).

Over residues 135–152 (KTKAKVAAKKPSTARKTR) the composition is skewed to basic residues. Residues 135–180 (KTKAKVAAKKPSTARKTRASTANLTNTSKRTSKRGRATPSASKQIE) form a disordered region. The segment covering 153–163 (ASTANLTNTSK) has biased composition (polar residues).

It belongs to the borealin family. Component of the CPC at least composed of survivin/birc5, incenp, cdca8/borealin and/or cdca9/dasra-A, and aurkb/aurora-B. Interacts with incenp (via N-terminus).

It localises to the nucleus. Its subcellular location is the chromosome. It is found in the centromere. The protein localises to the cytoplasm. The protein resides in the cytoskeleton. It localises to the spindle. Component of the chromosomal passenger complex (CPC), a complex that acts as a key regulator of mitosis. The CPC complex has essential functions at the centromere in ensuring correct chromosome alignment and segregation and is required for chromatin-induced microtubule stabilization and spindle assembly. Contributes to CPC function by facilitating loading of the CPC onto chromosomes. The protein is Borealin (cdca8) of Xenopus tropicalis (Western clawed frog).